A 254-amino-acid polypeptide reads, in one-letter code: MVPPETNQWFALMIGNTRQHWALFRGEHLSRTWHLTPEELACNPAQDYPNLPCWGASVGSVPLHQVYPRAIALTLEDIPLPQMYPTLGLDRALALWGALQVYGAPVCVVDAGTALTLTLANDRREFAGGVILPGVGLMARALADYTAALPYVPLPTEPPRRWGTTTTTAIASGLYYGTAAILQAYLDAFLQEFPQGTVIVTGGDRPFVSELLRTFLDSDRWCEDDHLVFWGIRALRNPAAKIEMHPMERIDEFH.

An ATP-binding site is contributed by 13–20; that stretch reads MIGNTRQH. Substrate contacts are provided by residues Tyr-84 and 88 to 91; that span reads GLDR. Asp-90 (proton acceptor) is an active-site residue. Asp-110 contributes to the K(+) binding site. An ATP-binding site is contributed by Thr-113. Thr-166 contributes to the substrate binding site.

This sequence belongs to the type III pantothenate kinase family. Homodimer. The cofactor is NH4(+). It depends on K(+) as a cofactor.

It localises to the cytoplasm. It catalyses the reaction (R)-pantothenate + ATP = (R)-4'-phosphopantothenate + ADP + H(+). Its pathway is cofactor biosynthesis; coenzyme A biosynthesis; CoA from (R)-pantothenate: step 1/5. Its function is as follows. Catalyzes the phosphorylation of pantothenate (Pan), the first step in CoA biosynthesis. In Thermosynechococcus vestitus (strain NIES-2133 / IAM M-273 / BP-1), this protein is Type III pantothenate kinase.